The chain runs to 351 residues: UDP-N-acetylenolpyruvoylglucosamine reductase (351 aa).

The 203-residue stretch at 11 to 213 folds into the FAD-binding PCMH-type domain; sequence GVGGSIACFI…KQVRDQVLRI (203 aa). R158 is a catalytic residue. Residue S239 is the Proton donor of the active site. The active site involves E343.

The protein belongs to the MurB family. FAD is required as a cofactor.

The protein localises to the cytoplasm. It carries out the reaction UDP-N-acetyl-alpha-D-muramate + NADP(+) = UDP-N-acetyl-3-O-(1-carboxyvinyl)-alpha-D-glucosamine + NADPH + H(+). It functions in the pathway cell wall biogenesis; peptidoglycan biosynthesis. In terms of biological role, cell wall formation. This is UDP-N-acetylenolpyruvoylglucosamine reductase from Tropheryma whipplei (strain TW08/27) (Whipple's bacillus).